The sequence spans 317 residues: Small ribosomal subunit protein RACK1 (317 aa).

WD repeat units follow at residues 13 to 44 (GHSG…IMWK), 61 to 91 (GHSH…RLWD), 103 to 133 (GHTK…KLWN), 146 to 178 (GHTE…KVWN), 190 to 220 (GHTG…MLWD), 231 to 260 (DSGD…KIWD), and 281 to 311 (AEPP…RVWQ).

Belongs to the WD repeat G protein beta family. Ribosomal protein RACK1 subfamily.

Its subcellular location is the cytoplasm. Its function is as follows. Involved in the recruitment, assembly and/or regulation of a variety of signaling molecules. Interacts with a wide variety of proteins and plays a role in many cellular processes. Required for VANGL2 membrane localization, inhibits Wnt signaling and regulates cellular polarization and oriented cell division during gastrulation. This is Small ribosomal subunit protein RACK1 (gnb2l1) from Oreochromis niloticus (Nile tilapia).